We begin with the raw amino-acid sequence, 380 residues long: MYG1 exonuclease (380 aa).

The transit peptide at 1–46 (MGRRFLRGILTLPLRSVLQAQHRMLGSEQDPPAKRPRNNLMAPPRI) directs the protein to the mitochondrion. Lys266 and Lys272 each carry N6-acetyllysine.

Belongs to the MYG1 family. Ubiquitously expressed, with highest levels in testis.

It is found in the nucleus. Its subcellular location is the nucleoplasm. It localises to the mitochondrion matrix. The protein resides in the nucleolus. In terms of biological role, 3'-5' RNA exonuclease which cleaves in situ on specific transcripts in both nucleus and mitochondrion. Involved in regulating spatially segregated organellar RNA processing, acts as a coordinator of nucleo-mitochondrial crosstalk. In nucleolus, processes pre-ribosomal RNA involved in ribosome assembly and alters cytoplasmic translation. In mitochondrial matrix, processes 3'-termini of the mito-ribosomal and messenger RNAs and controls translation of mitochondrial proteins. The polypeptide is MYG1 exonuclease (Mus musculus (Mouse)).